Reading from the N-terminus, the 226-residue chain is Isoprenyl transferase (226 aa).

The active site involves aspartate 12. Residue aspartate 12 participates in Mg(2+) binding. Substrate contacts are provided by residues 13–16, tryptophan 17, lysine 25, histidine 29, and 57–59; these read GNAR and SFE. The active-site Proton acceptor is asparagine 60. Substrate-binding positions include tryptophan 61, arginine 63, arginine 174, and 180 to 182; that span reads RIS. Residue glutamate 193 coordinates Mg(2+).

Belongs to the UPP synthase family. In terms of assembly, homodimer. It depends on Mg(2+) as a cofactor.

Catalyzes the condensation of isopentenyl diphosphate (IPP) with allylic pyrophosphates generating different type of terpenoids. In Rickettsia prowazekii (strain Madrid E), this protein is Isoprenyl transferase.